A 315-amino-acid polypeptide reads, in one-letter code: 4-hydroxy-3-methylbut-2-enyl diphosphate reductase (315 aa).

C12 is a binding site for [4Fe-4S] cluster. Residues H43 and H81 each coordinate (2E)-4-hydroxy-3-methylbut-2-enyl diphosphate. The dimethylallyl diphosphate site is built by H43 and H81. Isopentenyl diphosphate is bound by residues H43 and H81. Residue C103 participates in [4Fe-4S] cluster binding. H131 contributes to the (2E)-4-hydroxy-3-methylbut-2-enyl diphosphate binding site. H131 contacts dimethylallyl diphosphate. Position 131 (H131) interacts with isopentenyl diphosphate. E133 serves as the catalytic Proton donor. A (2E)-4-hydroxy-3-methylbut-2-enyl diphosphate-binding site is contributed by T172. C200 contacts [4Fe-4S] cluster. 3 residues coordinate (2E)-4-hydroxy-3-methylbut-2-enyl diphosphate: S228, N230, and S273. Dimethylallyl diphosphate is bound by residues S228, N230, and S273. Residues S228, N230, and S273 each contribute to the isopentenyl diphosphate site.

The protein belongs to the IspH family. The cofactor is [4Fe-4S] cluster.

The catalysed reaction is isopentenyl diphosphate + 2 oxidized [2Fe-2S]-[ferredoxin] + H2O = (2E)-4-hydroxy-3-methylbut-2-enyl diphosphate + 2 reduced [2Fe-2S]-[ferredoxin] + 2 H(+). The enzyme catalyses dimethylallyl diphosphate + 2 oxidized [2Fe-2S]-[ferredoxin] + H2O = (2E)-4-hydroxy-3-methylbut-2-enyl diphosphate + 2 reduced [2Fe-2S]-[ferredoxin] + 2 H(+). Its pathway is isoprenoid biosynthesis; dimethylallyl diphosphate biosynthesis; dimethylallyl diphosphate from (2E)-4-hydroxy-3-methylbutenyl diphosphate: step 1/1. It participates in isoprenoid biosynthesis; isopentenyl diphosphate biosynthesis via DXP pathway; isopentenyl diphosphate from 1-deoxy-D-xylulose 5-phosphate: step 6/6. In terms of biological role, catalyzes the conversion of 1-hydroxy-2-methyl-2-(E)-butenyl 4-diphosphate (HMBPP) into a mixture of isopentenyl diphosphate (IPP) and dimethylallyl diphosphate (DMAPP). Acts in the terminal step of the DOXP/MEP pathway for isoprenoid precursor biosynthesis. This Exiguobacterium sibiricum (strain DSM 17290 / CCUG 55495 / CIP 109462 / JCM 13490 / 255-15) protein is 4-hydroxy-3-methylbut-2-enyl diphosphate reductase.